The sequence spans 446 residues: 5-hydroxytryptamine receptor 7 (446 aa).

The Extracellular segment spans residues 1–84 (MMGVNSSGRP…INYGRAEKVV (84 aa)). Residues Asn5 and Asn67 are each glycosylated (N-linked (GlcNAc...) asparagine). The helical transmembrane segment at 85-109 (IGSILTLITLLTIAGNCLVVISVCF) threads the bilayer. Residues 110–119 (VKKLRQPSNY) are Cytoplasmic-facing. Residues 120–141 (LIVSLALADLSVAVAVIPFVSV) form a helical membrane-spanning segment. Over 142-153 (TDLIGGKWIFGH) the chain is Extracellular. The chain crosses the membrane as a helical span at residues 154-179 (FFCNVFIAMDVMCCTASIMTLCVISI). A disulfide bridge connects residues Cys156 and Cys232. Asp163 contributes to the serotonin binding site. Over 180 to 199 (DRYLGITRPLTYPVRQNGKC) the chain is Cytoplasmic. The helical transmembrane segment at 200–220 (MPKMILSVWLLSASITLPPLF) threads the bilayer. The Extracellular portion of the chain corresponds to 221–238 (GWAQNVNDDKVCLISQDF). A helical transmembrane segment spans residues 239 to 261 (GYTIYSTAVAFYIPMSVMLFMYY). Residues 262–327 (RIYKAARKSA…SIFKREQKAA (66 aa)) are Cytoplasmic-facing. A helical membrane pass occupies residues 328-353 (TTLGIIVGAFTVCWLPFFLLSTARPF). Residues 354–364 (ICGTACSCIPL) are Extracellular-facing. A helical membrane pass occupies residues 365–388 (WVERTCLWLGYANSLINPFIYAFF). Residues 389-446 (NRDLRTTYRSLLQCQYRNINRKLSAAGMHEALKLAERPERPECVLQNSDYCRKKGHDS) lie on the Cytoplasmic side of the membrane. A lipid anchor (S-palmitoyl cysteine) is attached at Cys402.

The protein belongs to the G-protein coupled receptor 1 family.

Its subcellular location is the cell membrane. In terms of biological role, G-protein coupled receptor for 5-hydroxytryptamine (serotonin), a biogenic hormone that functions as a neurotransmitter, a hormone and a mitogen. Ligand binding causes a conformation change that triggers signaling via guanine nucleotide-binding proteins (G proteins) and modulates the activity of downstream effectors. HTR7 is coupled to G(s) G alpha proteins and mediates activation of adenylate cyclase activity. The sequence is that of 5-hydroxytryptamine receptor 7 (HTR7) from Cavia porcellus (Guinea pig).